We begin with the raw amino-acid sequence, 120 residues long: MDYEFLRDITGVVKVRMSMGHEVVGHWFNEEVKENLALLDEVEQAARALKGSERSWQRAGHEYTLWMDGEEVMVRANQLEFTGDEMEEGMNYYDEESLSLCGVEDFLQVVAAYRHFIQQR.

This sequence belongs to the UPF0231 family.

In Citrobacter koseri (strain ATCC BAA-895 / CDC 4225-83 / SGSC4696), this protein is UPF0231 protein CKO_03249.